Here is a 506-residue protein sequence, read N- to C-terminus: Probable UTP--glucose-1-phosphate uridylyltransferase (506 aa).

Phosphoserine occurs at positions 15 and 17. Residues 115–118 (LNGG), K129, Q192, and G221 each bind UTP. 117–118 (GG) contributes to the substrate binding site. K129 is a Mg(2+) binding site. Residues H222 and 250 to 252 (NID) each bind substrate. 2 residues coordinate UTP: D252 and K394. Residue D252 coordinates Mg(2+). K394 is an active-site residue. Residues 455–506 (HLTITGDVNIGRNVTLKGTVIIVASDANRIDIPNGSVLENCVITGNLNILEH) form an oligomerization region.

This sequence belongs to the UDPGP type 1 family. Homooctamer.

The protein resides in the cytoplasm. The protein localises to the nucleus. It catalyses the reaction alpha-D-glucose 1-phosphate + UTP + H(+) = UDP-alpha-D-glucose + diphosphate. Functionally, plays a central role as a glucosyl donor in cellular metabolic pathways. This chain is Probable UTP--glucose-1-phosphate uridylyltransferase (fyu1), found in Schizosaccharomyces pombe (strain 972 / ATCC 24843) (Fission yeast).